Here is a 658-residue protein sequence, read N- to C-terminus: Glycogen debranching enzyme (658 aa).

The Nucleophile role is filled by D336. E371 acts as the Proton donor in catalysis.

The protein belongs to the glycosyl hydrolase 13 family.

The catalysed reaction is Hydrolysis of (1-&gt;6)-alpha-D-glucosidic linkages to branches with degrees of polymerization of three or four glucose residues in limit dextrin.. It functions in the pathway glycan degradation; glycogen degradation. Its function is as follows. Removes maltotriose and maltotetraose chains that are attached by 1,6-alpha-linkage to the limit dextrin main chain, generating a debranched limit dextrin. In Klebsiella pneumoniae (strain 342), this protein is Glycogen debranching enzyme.